Here is a 103-residue protein sequence, read N- to C-terminus: Alpha-ketoglutarate dehydrogenase component 4 (103 aa).

Met1 is modified (N-acetylmethionine). Lys5 is modified (N6-succinyllysine). Residues 20-69 form a disordered region; it reads TPLIRFPDRRDNPKPNVSEALRSAGLPSHSSVISQHSKGSKSPDLLMYQG. The span at 47 to 56 shows a compositional bias: polar residues; sequence SHSSVISQHS. Residues Ser49, Ser61, and Ser90 each carry the phosphoserine modification.

This sequence belongs to the alpha-ketoglutarate dehydrogenase component 4 family. As to quaternary structure, component of the 2-oxoglutarate dehydrogenase complex (OGDHC), composed of OGDH (2-oxoglutarate dehydrogenase; also called E1 subunit), DLST (dihydrolipoamide succinyltransferase; also called E2 subunit) and DLD (dihydrolipoamide dehydrogenase; also called E3 subunit), and the assembly factor KGD4. Within OGDHC complex, interacts (via N-terminus) with E3 subunit and (via C-terminus) with E2 subunit.

The protein resides in the mitochondrion. In terms of biological role, molecular adapter that is necessary to form a stable 2-oxoglutarate dehydrogenase enzyme complex (OGDHC). Enables the specific recruitment of E3 subunit to E2 subunit in the 2-oxoglutarate dehydrogenase complex (OGDHC). The chain is Alpha-ketoglutarate dehydrogenase component 4 from Homo sapiens (Human).